The sequence spans 447 residues: Signal recognition particle 54 kDa protein (447 aa).

Residues 108 to 115, 188 to 192, and 246 to 249 contribute to the GTP site; these read GLYGMGKT, DTAGR, and TKLD.

This sequence belongs to the GTP-binding SRP family. SRP54 subfamily. In terms of assembly, part of the signal recognition particle protein translocation system, which is composed of SRP and FtsY. Archaeal SRP consists of a 7S RNA molecule of 300 nucleotides and two protein subunits: SRP54 and SRP19.

It localises to the cytoplasm. The catalysed reaction is GTP + H2O = GDP + phosphate + H(+). Involved in targeting and insertion of nascent membrane proteins into the cytoplasmic membrane. Binds to the hydrophobic signal sequence of the ribosome-nascent chain (RNC) as it emerges from the ribosomes. The SRP-RNC complex is then targeted to the cytoplasmic membrane where it interacts with the SRP receptor FtsY. The polypeptide is Signal recognition particle 54 kDa protein (Methanopyrus kandleri (strain AV19 / DSM 6324 / JCM 9639 / NBRC 100938)).